The following is a 402-amino-acid chain: Acetate kinase (402 aa).

Residue asparagine 7 participates in Mg(2+) binding. Lysine 14 is a binding site for ATP. Residue arginine 95 participates in substrate binding. Aspartate 152 functions as the Proton donor/acceptor in the catalytic mechanism. ATP is bound by residues 212-216, 286-288, and 334-338; these read HLGNG, DMR, and GIGEN. Glutamate 388 contacts Mg(2+).

This sequence belongs to the acetokinase family. As to quaternary structure, homodimer. The cofactor is Mg(2+). Requires Mn(2+) as cofactor.

It localises to the cytoplasm. The catalysed reaction is acetate + ATP = acetyl phosphate + ADP. It functions in the pathway metabolic intermediate biosynthesis; acetyl-CoA biosynthesis; acetyl-CoA from acetate: step 1/2. Catalyzes the formation of acetyl phosphate from acetate and ATP. Can also catalyze the reverse reaction. This chain is Acetate kinase, found in Nitratidesulfovibrio vulgaris (strain ATCC 29579 / DSM 644 / CCUG 34227 / NCIMB 8303 / VKM B-1760 / Hildenborough) (Desulfovibrio vulgaris).